The following is a 313-amino-acid chain: Maintenance of mitochondrial morphology protein 1 (313 aa).

Residues 1–12 lie on the Lumenal side of the membrane; the sequence is MIHLPQGSFTQG. The helical transmembrane segment at 13 to 33 threads the bilayer; that stretch reads LIVGQLLTLAIIYVFLRFFLF. Residues 34–313 are Cytoplasmic-facing; it reads CSPIPKSVAN…APQEESSNED (280 aa). The span at 42–63 shows a compositional bias: polar residues; the sequence is ANSPKQTGNETPDETPSTPLSN. The segment at 42–65 is disordered; it reads ANSPKQTGNETPDETPSTPLSNNK. One can recognise an SMP-LTD domain in the interval 90 to 288; that stretch reads EPESLDWFNV…SPQFQQIAIP (199 aa).

Belongs to the MMM1 family. As to quaternary structure, homodimer. Component of the ER-mitochondria encounter structure (ERMES) or MDM complex, composed of mmm1, mdm10, mdm12 and mdm34. A mmm1 homodimer associates with one molecule of mdm12 on each side in a pairwise head-to-tail manner, and the SMP-LTD domains of mmm1 and mdm12 generate a continuous hydrophobic tunnel for phospholipid trafficking.

The protein resides in the endoplasmic reticulum membrane. Functionally, component of the ERMES/MDM complex, which serves as a molecular tether to connect the endoplasmic reticulum (ER) and mitochondria. Components of this complex are involved in the control of mitochondrial shape and protein biogenesis, and function in nonvesicular lipid trafficking between the ER and mitochondria. The mdm12-mmm1 subcomplex functions in the major beta-barrel assembly pathway that is responsible for biogenesis of all outer membrane beta-barrel proteins, and acts in a late step after the SAM complex. The mdm10-mdm12-mmm1 subcomplex further acts in the TOM40-specific pathway after the action of the mdm12-mmm1 complex. Essential for establishing and maintaining the structure of mitochondria and maintenance of mtDNA nucleoids. The chain is Maintenance of mitochondrial morphology protein 1 from Schizosaccharomyces pombe (strain 972 / ATCC 24843) (Fission yeast).